The following is a 48-amino-acid chain: Light-harvesting polypeptide B-885 beta-2 chain (48 aa).

The Cytoplasmic portion of the chain corresponds to 1 to 20 (AEDRKSLSGLTEQEAQEFGT). A helical membrane pass occupies residues 21-43 (LYTQGVAFVAVIAIVAHALVWAW). A bacteriochlorophyll is bound at residue His-37. Residues 44–48 (RPWLQ) lie on the Periplasmic side of the membrane.

The protein belongs to the antenna complex beta subunit family. The core complex is formed by different alpha and beta chains, binding bacteriochlorophyll molecules, and arranged most probably in tetrameric structures disposed around the reaction center. The non-pigmented gamma chains may constitute additional components.

It is found in the cell inner membrane. Its function is as follows. Antenna complexes are light-harvesting systems, which transfer the excitation energy to the reaction centers. The sequence is that of Light-harvesting polypeptide B-885 beta-2 chain from Rhodocyclus tenuis (Rhodospirillum tenue).